A 183-amino-acid chain; its full sequence is Transmembrane protein 154 (183 aa).

The signal sequence occupies residues 1-22 (MQAPRAALVFALVIALVPVGRG). Topologically, residues 23-75 (NYEELENSGDTTVESERPNKVTIPSTFAAVTIKETLNANINSTNFAPDENQLE) are extracellular. A helical membrane pass occupies residues 76–96 (FILMVLIPLILLVLLLLSVVF). Residues 97–183 (LATYYKRKRT…SNHNPSDSES (87 aa)) are Cytoplasmic-facing. The tract at residues 163–183 (ECLPTLKEEKESNHNPSDSES) is disordered. Residue serine 179 is modified to Phosphoserine.

Its subcellular location is the membrane. The sequence is that of Transmembrane protein 154 (TMEM154) from Homo sapiens (Human).